Consider the following 431-residue polypeptide: Glutamate--tRNA ligase 1 (431 aa).

A 'HIGH' region motif is present at residues 11–21 (PSPTGDLHLGG). The short motif at 203 to 207 (KLSKR) is the 'KMSKS' region element. ATP is bound at residue Lys206.

It belongs to the class-I aminoacyl-tRNA synthetase family. Glutamate--tRNA ligase type 1 subfamily. As to quaternary structure, monomer.

The protein resides in the cytoplasm. The enzyme catalyses tRNA(Glu) + L-glutamate + ATP = L-glutamyl-tRNA(Glu) + AMP + diphosphate. Functionally, catalyzes the attachment of glutamate to tRNA(Glu) in a two-step reaction: glutamate is first activated by ATP to form Glu-AMP and then transferred to the acceptor end of tRNA(Glu). This is Glutamate--tRNA ligase 1 from Rubrobacter xylanophilus (strain DSM 9941 / JCM 11954 / NBRC 16129 / PRD-1).